A 1624-amino-acid chain; its full sequence is Putative serine/threonine-protein kinase/receptor R831 (1624 aa).

Positions 1 to 25 (MHSVYTKYTIILILLVIYQGLPTNT) are cleaved as a signal peptide. N-linked (GlcNAc...) asparagine; by host glycosylation is found at Asn152, Asn169, Asn200, Asn205, Asn225, Asn240, Asn245, Asn292, Asn364, Asn479, Asn541, Asn720, and Asn737. The chain crosses the membrane as a helical span at residues 747–767 (VIPIACIFGLLLLTLLIVIIF). Residues 786 to 1049 (LEIGETLGTG…EIMTRLSNIL (264 aa)) form the Protein kinase 1 domain. ATP contacts are provided by residues 792 to 800 (LGTGGYGEV) and Lys813. The active-site Proton acceptor is Asp908. Residues 1054-1093 (NMTSGTSSSSLSSGGIGKSITDSKSSNSRSSVESSNTSNT) are compositionally biased toward low complexity. The disordered stretch occupies residues 1054–1101 (NMTSGTSSSSLSSGGIGKSITDSKSSNSRSSVESSNTSNTFRGIDRHN). The 144-residue stretch at 1109–1252 (TVAFIDIISA…STVNITGKIT (144 aa)) folds into the Guanylate cyclase domain. The region spanning 1364–1615 (ISIGKQIGLG…MTEVVQQLML (252 aa)) is the Protein kinase 2 domain. ATP-binding positions include 1370–1378 (IGLGSYGIV) and Lys1391. The Proton acceptor role is filled by Asp1487.

The protein localises to the membrane. The enzyme catalyses L-seryl-[protein] + ATP = O-phospho-L-seryl-[protein] + ADP + H(+). It carries out the reaction L-threonyl-[protein] + ATP = O-phospho-L-threonyl-[protein] + ADP + H(+). The protein is Putative serine/threonine-protein kinase/receptor R831 of Acanthamoeba polyphaga (Amoeba).